The sequence spans 120 residues: MLSACNRMRRSSEFDATVKFGLRAVQSDVIIHVWRGCNRDETKAPHVGLIIAKTVGSAVERHRVARRLRHVARTMLGELGGADQVVIRALPSSRNVSSAWLAQQLRNGLRCALDLAETDW.

The protein belongs to the RnpA family. As to quaternary structure, consists of a catalytic RNA component (M1 or rnpB) and a protein subunit.

The catalysed reaction is Endonucleolytic cleavage of RNA, removing 5'-extranucleotides from tRNA precursor.. Its function is as follows. RNaseP catalyzes the removal of the 5'-leader sequence from pre-tRNA to produce the mature 5'-terminus. It can also cleave other RNA substrates such as 4.5S RNA. The protein component plays an auxiliary but essential role in vivo by binding to the 5'-leader sequence and broadening the substrate specificity of the ribozyme. The sequence is that of Ribonuclease P protein component from Mycobacterium leprae (strain Br4923).